The chain runs to 359 residues: Small ribosomal subunit protein mS22 (359 aa).

It belongs to the mitochondrion-specific ribosomal protein mS22 family. Component of the mitochondrial ribosome small subunit (28S) which comprises a 12S rRNA and about 30 distinct proteins.

It localises to the mitochondrion. The polypeptide is Small ribosomal subunit protein mS22 (MRPS22) (Bos taurus (Bovine)).